A 173-amino-acid polypeptide reads, in one-letter code: Large ribosomal RNA subunit accumulation protein YceD (173 aa).

The protein belongs to the DUF177 domain family.

Plays a role in synthesis, processing and/or stability of 23S rRNA. This chain is Large ribosomal RNA subunit accumulation protein YceD (yceD), found in Salmonella typhi.